A 291-amino-acid polypeptide reads, in one-letter code: Phosphatidylserine decarboxylase proenzyme (291 aa).

Catalysis depends on charge relay system; for autoendoproteolytic cleavage activity residues aspartate 90, histidine 147, and serine 253. The active-site Schiff-base intermediate with substrate; via pyruvic acid; for decarboxylase activity is serine 253. Pyruvic acid (Ser); by autocatalysis is present on serine 253.

The protein belongs to the phosphatidylserine decarboxylase family. PSD-B subfamily. Prokaryotic type I sub-subfamily. In terms of assembly, heterodimer of a large membrane-associated beta subunit and a small pyruvoyl-containing alpha subunit. Requires pyruvate as cofactor. Is synthesized initially as an inactive proenzyme. Formation of the active enzyme involves a self-maturation process in which the active site pyruvoyl group is generated from an internal serine residue via an autocatalytic post-translational modification. Two non-identical subunits are generated from the proenzyme in this reaction, and the pyruvate is formed at the N-terminus of the alpha chain, which is derived from the carboxyl end of the proenzyme. The autoendoproteolytic cleavage occurs by a canonical serine protease mechanism, in which the side chain hydroxyl group of the serine supplies its oxygen atom to form the C-terminus of the beta chain, while the remainder of the serine residue undergoes an oxidative deamination to produce ammonia and the pyruvoyl prosthetic group on the alpha chain. During this reaction, the Ser that is part of the protease active site of the proenzyme becomes the pyruvoyl prosthetic group, which constitutes an essential element of the active site of the mature decarboxylase.

It localises to the cell membrane. It carries out the reaction a 1,2-diacyl-sn-glycero-3-phospho-L-serine + H(+) = a 1,2-diacyl-sn-glycero-3-phosphoethanolamine + CO2. It participates in phospholipid metabolism; phosphatidylethanolamine biosynthesis; phosphatidylethanolamine from CDP-diacylglycerol: step 2/2. Functionally, catalyzes the formation of phosphatidylethanolamine (PtdEtn) from phosphatidylserine (PtdSer). The polypeptide is Phosphatidylserine decarboxylase proenzyme (Photobacterium profundum (strain SS9)).